The sequence spans 100 residues: Large ribosomal subunit protein uL23 (100 aa).

It belongs to the universal ribosomal protein uL23 family. Part of the 50S ribosomal subunit. Contacts protein L29, and trigger factor when it is bound to the ribosome.

Functionally, one of the early assembly proteins it binds 23S rRNA. One of the proteins that surrounds the polypeptide exit tunnel on the outside of the ribosome. Forms the main docking site for trigger factor binding to the ribosome. In Shewanella denitrificans (strain OS217 / ATCC BAA-1090 / DSM 15013), this protein is Large ribosomal subunit protein uL23.